Consider the following 444-residue polypeptide: Tol-Pal system protein TolB (444 aa).

The signal sequence occupies residues 1 to 19 (MRNIIYFILSLLFSVTSYA).

It belongs to the TolB family. As to quaternary structure, the Tol-Pal system is composed of five core proteins: the inner membrane proteins TolA, TolQ and TolR, the periplasmic protein TolB and the outer membrane protein Pal. They form a network linking the inner and outer membranes and the peptidoglycan layer.

It is found in the periplasm. Functionally, part of the Tol-Pal system, which plays a role in outer membrane invagination during cell division and is important for maintaining outer membrane integrity. In Rickettsia rickettsii (strain Sheila Smith), this protein is Tol-Pal system protein TolB.